A 928-amino-acid chain; its full sequence is DENN domain-containing protein 2C (928 aa).

Disordered regions lie at residues 67 to 105 (KSKN…YDDT) and 245 to 266 (QSSL…IRGR). Over residues 85–105 (ENTKSHDQSENENKKHEYDDT) the composition is skewed to basic and acidic residues. Ser271 carries the phosphoserine modification. A disordered region spans residues 428 to 456 (KLHSYTGKELPPTKGETSGNESDAEYLPK). A uDENN domain is found at 492–641 (ELFVVVSLQK…PFPAPGRTIT (150 aa)). Residues 663–796 (RLEHVDFKCL…LQAALMQILE (134 aa)) form the cDENN domain. Residues 798 to 888 (RNEILTQEQN…QDRELRKSGV (91 aa)) form the dDENN domain.

Functionally, guanine nucleotide exchange factor (GEF) which may activate RAB9A and RAB9B. Promotes the exchange of GDP to GTP, converting inactive GDP-bound Rab proteins into their active GTP-bound form. The chain is DENN domain-containing protein 2C (DENND2C) from Homo sapiens (Human).